A 164-amino-acid chain; its full sequence is Diphosphoinositol polyphosphate phosphohydrolase 3-alpha (164 aa).

Substrate contacts are provided by residues Arg-9, 17 to 19 (KKR), and 38 to 40 (SSR). The 128-residue stretch at 17 to 144 (KKRAACLCFR…VHAEYLEKLK (128 aa)) folds into the Nudix hydrolase domain. Mg(2+) contacts are provided by Gly-49 and Glu-65. Positions 50–71 (GGMEPEEEPDGAAVREVYEEAG) match the Nudix box motif. Catalysis depends on Glu-68, which acts as the Proton acceptor. Glu-69 is a binding site for Mg(2+). Residues 89 to 91 (RKH), Arg-115, and Lys-133 contribute to the substrate site. Residues 144 to 164 (KLGGSPTNGNSAAPSPPESEP) form a disordered region.

This sequence belongs to the Nudix hydrolase family. DIPP subfamily. The cofactor is Mg(2+). Mn(2+) is required as a cofactor. Mainly expressed in testis, liver kidney and, at lower level, in heart, brain, spleen, lung and skeletal muscle.

It is found in the cytoplasm. The catalysed reaction is diphospho-myo-inositol polyphosphate + H2O = myo-inositol polyphosphate + phosphate.. It carries out the reaction P(1),P(6)-bis(5'-adenosyl) hexaphosphate + H2O = adenosine 5'-pentaphosphate + AMP + 2 H(+). It catalyses the reaction P(1),P(5)-bis(5'-adenosyl) pentaphosphate + H2O = adenosine 5'-tetraphosphate + AMP + 2 H(+). Cleaves a beta-phosphate from the diphosphate groups in PP-InsP5 (diphosphoinositol pentakisphosphate), suggesting that it may play a role in signal transduction. Also able to catalyze the hydrolysis of dinucleoside oligophosphates, with Ap6A and Ap5A being the preferred substrates. The major reaction products are ADP and p4a from Ap6A and ADP and ATP from Ap5A. Also able to hydrolyze 5-phosphoribose 1-diphosphate; however, the relevance of such activity in vivo remains unclear. This is Diphosphoinositol polyphosphate phosphohydrolase 3-alpha from Mus musculus (Mouse).